The chain runs to 434 residues: Cobyrinate a,c-diamide synthase (434 aa).

Residues Lys240–Arg430 form the GATase cobBQ-type domain. The active-site Nucleophile is the Cys322.

The protein belongs to the CobB/CbiA family. It depends on Mg(2+) as a cofactor.

It carries out the reaction cob(II)yrinate + 2 L-glutamine + 2 ATP + 2 H2O = cob(II)yrinate a,c diamide + 2 L-glutamate + 2 ADP + 2 phosphate + 2 H(+). The protein operates within cofactor biosynthesis; adenosylcobalamin biosynthesis; cob(II)yrinate a,c-diamide from sirohydrochlorin (anaerobic route): step 10/10. In terms of biological role, catalyzes the ATP-dependent amidation of the two carboxylate groups at positions a and c of cobyrinate, using either L-glutamine or ammonia as the nitrogen source. This chain is Cobyrinate a,c-diamide synthase, found in Sulfolobus acidocaldarius (strain ATCC 33909 / DSM 639 / JCM 8929 / NBRC 15157 / NCIMB 11770).